A 214-amino-acid chain; its full sequence is MRVGIFGGTFDPIHVGHMIVAEQVMDELGMERVVFVPSGIPPHKEASSVRAPAEDRYEMVLAAIAGNERFSADRIEIDAGRPMHTVETVPLLKERLPGEEWFFITGADEVSNLLSWKDPDRLLEEVVMVAATRPGYDLSRLGHLEARLKNFDRIFPVECTRVDVSATGIRRRILQGKSIRYLVPEGVREIILSRGLYRADARRTRGELLKEERS.

The protein belongs to the NadD family.

The enzyme catalyses nicotinate beta-D-ribonucleotide + ATP + H(+) = deamido-NAD(+) + diphosphate. It functions in the pathway cofactor biosynthesis; NAD(+) biosynthesis; deamido-NAD(+) from nicotinate D-ribonucleotide: step 1/1. In terms of biological role, catalyzes the reversible adenylation of nicotinate mononucleotide (NaMN) to nicotinic acid adenine dinucleotide (NaAD). This Rubrobacter xylanophilus (strain DSM 9941 / JCM 11954 / NBRC 16129 / PRD-1) protein is Probable nicotinate-nucleotide adenylyltransferase.